The sequence spans 159 residues: MKIISKIIVILLAASMLQACQGPGGMNKQGSGTLIGGTAGALLGSQFGGGTGRLAAVGAGALLGAILGNQIGAGMDEQDRKLAELTSQRALEAAPSGSSVQWRNPDNGNYGTVTPSKAYKNNTGQYCREYTQTVVVGGKQQKAYGTACRQPDGQWQVVN.

Positions 1–19 (MKIISKIIVILLAASMLQA) are cleaved as a signal peptide. Cys20 carries the N-palmitoyl cysteine lipid modification. The S-diacylglycerol cysteine moiety is linked to residue Cys20.

It belongs to the rickettsiale 17 kDa surface antigen family.

The protein localises to the cell outer membrane. This Rickettsia bellii protein is 17 kDa surface antigen (omp).